Here is a 204-residue protein sequence, read N- to C-terminus: Proteasome subunit beta type-3-A (204 aa).

Belongs to the peptidase T1B family. As to quaternary structure, component of the 20S core complex of the 26S proteasome. The 26S proteasome is composed of a core protease (CP), known as the 20S proteasome, capped at one or both ends by the 19S regulatory particle (RP/PA700). The 20S proteasome core is composed of 28 subunits that are arranged in four stacked rings, resulting in a barrel-shaped structure. The two end rings are each formed by seven alpha subunits, and the two central rings are each formed by seven beta subunits. The catalytic chamber with the active sites is on the inside of the barrel.

The protein resides in the cytoplasm. It localises to the nucleus. Non-catalytic component of the proteasome, a multicatalytic proteinase complex which is characterized by its ability to cleave peptides with Arg, Phe, Tyr, Leu, and Glu adjacent to the leaving group at neutral or slightly basic pH. The proteasome has an ATP-dependent proteolytic activity. The protein is Proteasome subunit beta type-3-A (PBC1) of Arabidopsis thaliana (Mouse-ear cress).